The sequence spans 238 residues: Pyridoxine 5'-phosphate synthase (238 aa).

Position 9 (asparagine 9) interacts with 3-amino-2-oxopropyl phosphate. 11 to 12 provides a ligand contact to 1-deoxy-D-xylulose 5-phosphate; it reads DH. Residue arginine 20 coordinates 3-amino-2-oxopropyl phosphate. Histidine 45 serves as the catalytic Proton acceptor. 1-deoxy-D-xylulose 5-phosphate is bound by residues arginine 47 and histidine 52. Glutamate 72 functions as the Proton acceptor in the catalytic mechanism. Residue threonine 102 participates in 1-deoxy-D-xylulose 5-phosphate binding. Histidine 189 functions as the Proton donor in the catalytic mechanism. 3-amino-2-oxopropyl phosphate-binding positions include glycine 190 and 211–212; that span reads GH.

The protein belongs to the PNP synthase family. Homooctamer; tetramer of dimers.

It is found in the cytoplasm. The enzyme catalyses 3-amino-2-oxopropyl phosphate + 1-deoxy-D-xylulose 5-phosphate = pyridoxine 5'-phosphate + phosphate + 2 H2O + H(+). The protein operates within cofactor biosynthesis; pyridoxine 5'-phosphate biosynthesis; pyridoxine 5'-phosphate from D-erythrose 4-phosphate: step 5/5. Catalyzes the complicated ring closure reaction between the two acyclic compounds 1-deoxy-D-xylulose-5-phosphate (DXP) and 3-amino-2-oxopropyl phosphate (1-amino-acetone-3-phosphate or AAP) to form pyridoxine 5'-phosphate (PNP) and inorganic phosphate. This chain is Pyridoxine 5'-phosphate synthase, found in Ehrlichia canis (strain Jake).